The sequence spans 117 residues: Large ribosomal subunit protein bL19 (117 aa).

This sequence belongs to the bacterial ribosomal protein bL19 family.

Its function is as follows. This protein is located at the 30S-50S ribosomal subunit interface and may play a role in the structure and function of the aminoacyl-tRNA binding site. This is Large ribosomal subunit protein bL19 from Aliivibrio fischeri (strain ATCC 700601 / ES114) (Vibrio fischeri).